We begin with the raw amino-acid sequence, 212 residues long: Probable GTP-binding protein EngB (212 aa).

Positions 38–210 (ALPQIAFVGK…KTSLAKCIKL (173 aa)) constitute an EngB-type G domain. GTP contacts are provided by residues 46 to 53 (GKSNVGKS), 73 to 77 (GRTRQ), 91 to 94 (DLPG), 158 to 161 (TKSD), and 189 to 191 (VSS). Mg(2+) is bound by residues serine 53 and threonine 75.

The protein belongs to the TRAFAC class TrmE-Era-EngA-EngB-Septin-like GTPase superfamily. EngB GTPase family. Mg(2+) is required as a cofactor.

Necessary for normal cell division and for the maintenance of normal septation. The polypeptide is Probable GTP-binding protein EngB (Rickettsia bellii (strain OSU 85-389)).